A 944-amino-acid polypeptide reads, in one-letter code: Isoleucine--tRNA ligase (944 aa).

The short motif at Pro58–His68 is the 'HIGH' region element. Glu563 lines the L-isoleucyl-5'-AMP pocket. The short motif at Lys604 to Ser608 is the 'KMSKS' region element. Lys607 is an ATP binding site. Positions 907, 910, 927, and 930 each coordinate Zn(2+).

The protein belongs to the class-I aminoacyl-tRNA synthetase family. IleS type 1 subfamily. Monomer. It depends on Zn(2+) as a cofactor.

The protein localises to the cytoplasm. It carries out the reaction tRNA(Ile) + L-isoleucine + ATP = L-isoleucyl-tRNA(Ile) + AMP + diphosphate. Functionally, catalyzes the attachment of isoleucine to tRNA(Ile). As IleRS can inadvertently accommodate and process structurally similar amino acids such as valine, to avoid such errors it has two additional distinct tRNA(Ile)-dependent editing activities. One activity is designated as 'pretransfer' editing and involves the hydrolysis of activated Val-AMP. The other activity is designated 'posttransfer' editing and involves deacylation of mischarged Val-tRNA(Ile). In Salmonella choleraesuis (strain SC-B67), this protein is Isoleucine--tRNA ligase.